Reading from the N-terminus, the 65-residue chain is Large ribosomal subunit protein uL29 (65 aa).

The protein belongs to the universal ribosomal protein uL29 family.

The chain is Large ribosomal subunit protein uL29 from Mycoplasmopsis synoviae (strain 53) (Mycoplasma synoviae).